The chain runs to 142 residues: MGLTTAQIKAIQDHWFLNIKGCLQAAADSIFFKYLTAYPGDLAFFHKFSSVPLYGLRSNPAYKAQTLTVINYLDKVVDALGGNAGALMKAKVPSHDAMGITPKHFGQLLKLVGGVFQEEFSADPTTVAAWGDAAGVLVAAMK.

The region spanning 2–142 is the Globin domain; sequence GLTTAQIKAI…AAGVLVAAMK (141 aa). His-95 is a binding site for heme b.

Belongs to the globin family. Homotetramer.

Its function is as follows. Hemoglobin F-I appears to function in storage, rather than transport of oxygen. The polypeptide is Hemoglobin F-I (Urechis caupo (Innkeeper worm)).